Consider the following 193-residue polypeptide: NADPH:quinone oxidoreductase MdaB (193 aa).

FAD is bound by residues 16–23, 69–72, tyrosine 108, and 124–127; these read SNGQLNDT, GWWM, and TWNA.

This sequence belongs to the oxidoreductase MdaB family. In terms of assembly, homodimer. FAD serves as cofactor.

The protein resides in the cytoplasm. It catalyses the reaction a quinone + NADPH + H(+) = a quinol + NADP(+). Functionally, NADPH-specific quinone reductase. In Escherichia coli O157:H7, this protein is NADPH:quinone oxidoreductase MdaB.